Reading from the N-terminus, the 186-residue chain is Ribosome-recycling factor (186 aa).

This sequence belongs to the RRF family.

Its subcellular location is the cytoplasm. Its function is as follows. Responsible for the release of ribosomes from messenger RNA at the termination of protein biosynthesis. May increase the efficiency of translation by recycling ribosomes from one round of translation to another. The sequence is that of Ribosome-recycling factor from Brucella melitensis biotype 2 (strain ATCC 23457).